A 290-amino-acid polypeptide reads, in one-letter code: Outer dense fiber protein 4 (290 aa).

Phosphoserine is present on serine 28. The next 4 helical transmembrane spans lie at alanine 44–phenylalanine 64, proline 125–threonine 145, leucine 164–phenylalanine 184, and isoleucine 201–leucine 221. A disordered region spans residues glycine 247–glycine 290. Positions valine 252–glutamate 266 are enriched in polar residues.

As to expression, expressed in testis.

The protein localises to the membrane. Its function is as follows. Component of the outer dense fibers (ODF) of spermatozoa which could be involved in sperm tail structure, sperm movement and general organization of cellular cytoskeleton. The protein is Outer dense fiber protein 4 (Odf4) of Mus musculus (Mouse).